The sequence spans 685 residues: Sodium/glucose cotransporter 4 (685 aa).

Residues 1 to 20 (MNTELVAMEPGVSRNGVRTE) are disordered. The Extracellular segment spans residues 1-32 (MNTELVAMEPGVSRNGVRTETTTNPSLGLHTY). A helical transmembrane segment spans residues 33 to 53 (DIVVVVIYFVFVLAVGIWSSI). Topologically, residues 54–71 (RASRGTVGGYFLAGRSMT) are cytoplasmic. A helical transmembrane segment spans residues 72–94 (WWPIGASLMSSNVGSGLFIGLAG). The Extracellular segment spans residues 95–110 (TGAAGGLAVGGFEWNA). Residues 111–131 (TFLLLALGWIFVPVYIAAGVV) traverse the membrane as a helical segment. Over 132–153 (TMPQYLKKRFGGQRIQVYMSVL) the chain is Cytoplasmic. A helical transmembrane segment spans residues 154 to 174 (SLILYIFTKISTDIFSGALFI). The Extracellular portion of the chain corresponds to 175 to 186 (QMALGWNLYLST). The helical transmembrane segment at 187-207 (VILLVVTAVYTIAGGLTAVIY) threads the bilayer. Residues 208–213 (TDALQT) are Cytoplasmic-facing. The helical transmembrane segment at 214-234 (VIMVGGALVLMFLGFQEVGWY) threads the bilayer. The Extracellular portion of the chain corresponds to 235 to 271 (PGLQQLYRQAIPNTTVPNTTCHLPRPDAFHMLRDPVN). The N-linked (GlcNAc...) asparagine glycan is linked to Asn247. A helical membrane pass occupies residues 272 to 292 (GDIPWPGLIFGLTVLATWCWC). At 293 to 313 (TDQVIVQRSLAAKNLSHAKGG) the chain is on the cytoplasmic side. A helical transmembrane segment spans residues 314–334 (SVLGGYLKILPMFFIVMPGMI). Topologically, residues 335-379 (SRALYPDEVACVDPDICQRVCGARVGCSNIAYPKLVMALMPVGLR) are extracellular. Residues 380–402 (GLMIAVIMAALMSSLTSIFNSSS) form a helical membrane-spanning segment. The Cytoplasmic segment spans residues 403–423 (TLFAIDVWQRFRRQASEQELM). Residues 424–444 (VVGRLFVVFLVVISILWIPII) traverse the membrane as a helical segment. Residues 445 to 455 (QSSNSGQLFDY) lie on the Extracellular side of the membrane. A helical transmembrane segment spans residues 456–476 (IQSITSYLAPPITALFLLAIF). At 477-483 (CKRVNEP) the chain is on the cytoplasmic side. Residues 484–504 (GAFWGLMFGLVVGILRMILEF) traverse the membrane as a helical segment. At 505 to 526 (SYSAPACGEMDRRPAVLKDFHY) the chain is on the extracellular side. A helical transmembrane segment spans residues 527–547 (LYFALLLCGLTAIIIVVISFF). Over 548-664 (TEPIPDDKLA…SIEEEPLWRR (117 aa)) the chain is Cytoplasmic. Positions 577–616 (VSVNNTEDDNSPGLAGRPVVEGPAGDEEEANTTQGPEQPG) are disordered. A helical membrane pass occupies residues 665–685 (VCNINAIILLAINIFLWGYFA).

The protein belongs to the sodium:solute symporter (SSF) (TC 2.A.21) family.

The protein localises to the cell membrane. The enzyme catalyses D-mannose(out) + n Na(+)(out) = D-mannose(in) + n Na(+)(in). In terms of biological role, electrogenic Na(+)-coupled sugar symporter that may play a primary role in D-mannose and possibly D-fructose and D-glucose transport at the plasma membrane. Transporter activity is driven by a transmembrane Na(+) electrochemical gradient set by the Na(+)/K(+) pump. Exclusively recognizes sugar substrates having a pyranose ring with an axial hydroxyl group on carbon 2. The sequence is that of Sodium/glucose cotransporter 4 (Slc5a9) from Mus musculus (Mouse).